We begin with the raw amino-acid sequence, 1342 residues long: DNA-directed RNA polymerase subunit beta (1342 aa).

This sequence belongs to the RNA polymerase beta chain family. In terms of assembly, the RNAP catalytic core consists of 2 alpha, 1 beta, 1 beta' and 1 omega subunit. When a sigma factor is associated with the core the holoenzyme is formed, which can initiate transcription.

It catalyses the reaction RNA(n) + a ribonucleoside 5'-triphosphate = RNA(n+1) + diphosphate. Functionally, DNA-dependent RNA polymerase catalyzes the transcription of DNA into RNA using the four ribonucleoside triphosphates as substrates. The chain is DNA-directed RNA polymerase subunit beta from Pectobacterium atrosepticum (strain SCRI 1043 / ATCC BAA-672) (Erwinia carotovora subsp. atroseptica).